A 309-amino-acid chain; its full sequence is Dihydroorotate dehydrogenase B (NAD(+)), catalytic subunit (309 aa).

FMN-binding positions include Ser-21 and Lys-45 to Ala-46. Substrate-binding positions include Lys-45 and Asn-69–Leu-73. Asn-99 and Asn-127 together coordinate FMN. A substrate-binding site is contributed by Asn-127. Cys-130 serves as the catalytic Nucleophile. Positions 165 and 191 each coordinate FMN. Residue Asn-192 to Thr-193 coordinates substrate. FMN contacts are provided by residues Gly-217, Gly-243 to Gly-244, and Gly-265 to Thr-266.

It belongs to the dihydroorotate dehydrogenase family. Type 1 subfamily. Heterotetramer of 2 PyrK and 2 PyrD type B subunits. FMN is required as a cofactor.

It localises to the cytoplasm. It catalyses the reaction (S)-dihydroorotate + NAD(+) = orotate + NADH + H(+). It participates in pyrimidine metabolism; UMP biosynthesis via de novo pathway; orotate from (S)-dihydroorotate (NAD(+) route): step 1/1. Functionally, catalyzes the conversion of dihydroorotate to orotate with NAD(+) as electron acceptor. This is Dihydroorotate dehydrogenase B (NAD(+)), catalytic subunit (pyrD) from Bacillus cytotoxicus (strain DSM 22905 / CIP 110041 / 391-98 / NVH 391-98).